A 666-amino-acid chain; its full sequence is tRNA 5-methylaminomethyl-2-thiouridine biosynthesis bifunctional protein MnmC (666 aa).

The interval 1-253 (MSSPFVPIIT…KRHMICAHYE (253 aa)) is tRNA (mnm(5)s(2)U34)-methyltransferase. Residues 283–666 (VGGGLAGCFI…FLRKKIIQGP (384 aa)) form an FAD-dependent cmnm(5)s(2)U34 oxidoreductase region.

The protein in the N-terminal section; belongs to the methyltransferase superfamily. tRNA (mnm(5)s(2)U34)-methyltransferase family. This sequence in the C-terminal section; belongs to the DAO family. Requires FAD as cofactor.

The protein localises to the cytoplasm. It catalyses the reaction 5-aminomethyl-2-thiouridine(34) in tRNA + S-adenosyl-L-methionine = 5-methylaminomethyl-2-thiouridine(34) in tRNA + S-adenosyl-L-homocysteine + H(+). In terms of biological role, catalyzes the last two steps in the biosynthesis of 5-methylaminomethyl-2-thiouridine (mnm(5)s(2)U) at the wobble position (U34) in tRNA. Catalyzes the FAD-dependent demodification of cmnm(5)s(2)U34 to nm(5)s(2)U34, followed by the transfer of a methyl group from S-adenosyl-L-methionine to nm(5)s(2)U34, to form mnm(5)s(2)U34. The sequence is that of tRNA 5-methylaminomethyl-2-thiouridine biosynthesis bifunctional protein MnmC from Legionella pneumophila subsp. pneumophila (strain Philadelphia 1 / ATCC 33152 / DSM 7513).